The sequence spans 117 residues: Galanin-like peptide (117 aa).

An N-terminal signal peptide occupies residues 1–23 (MACSVHLVLFLTILLSLAETPES). A propeptide spanning residues 86-117 (TMGETFVKANTGDMHILDKNVPKEEATLDSES) is cleaved from the precursor.

This sequence belongs to the galanin family. As to expression, isoform 2 is found in brain, thymus and skin. Isoform 2 is found in the skin, in pericytes covering microvascular arterioles and venules on their abluminal surfaces. In larger vessels, isoform 2 is expressed in layers of smooth muscle cells. Isoform 2 is not detected in endothelial cells.

It is found in the secreted. Hypothalamic neuropeptide which binds to the G-protein-coupled galanin receptors (GALR1, GALR2 and GALR3). Involved in a large number of putative physiological functions in CNS homeostatic processes, including the regulation of gonadotropin-releasing hormone secretion. Its function is as follows. Exhibits antimicrobial activity against Gram-negative bacterias, inducing bacterial membrane blebbing. Exhibits potent and dose-dependent vasoconstrictor and anti-edema activity in the cutaneous microvasculature, a physiologic effects which does not appear to be mediated via GALR1 or GALR2. The chain is Galanin-like peptide (Galp) from Mus musculus (Mouse).